We begin with the raw amino-acid sequence, 241 residues long: Alpha/beta-tubulin-N-acetyltransferase 9 (241 aa).

One can recognise an N-acetyltransferase domain in the interval 34-181 (EELRHLTASE…VTLRLAVSEP (148 aa)).

It belongs to the acetyltransferase family. GNAT subfamily.

The enzyme catalyses N-terminal L-methionyl-[tubulin] + acetyl-CoA = N-terminal N(alpha)-acetyl-L-methionyl-[tubulin] + CoA + H(+). Functionally, N-acetyltransferase that mediates the acetylation of the N-terminal residues of alpha- and beta-tubulin. The polypeptide is Alpha/beta-tubulin-N-acetyltransferase 9 (Nat9) (Mus musculus (Mouse)).